The primary structure comprises 145 residues: Fluoride-specific ion channel FluC 2 (145 aa).

The next 4 membrane-spanning stretches (helical) occupy residues 16–36, 42–62, 80–100, and 113–133; these read MLLV…LSAA, VISV…GWLL, LFAG…AVDT, and ILYA…GIAL. Na(+) is bound by residues Gly-88 and Thr-91.

The protein belongs to the fluoride channel Fluc/FEX (TC 1.A.43) family.

The protein resides in the cell membrane. The enzyme catalyses fluoride(in) = fluoride(out). Na(+) is not transported, but it plays an essential structural role and its presence is essential for fluoride channel function. Functionally, fluoride-specific ion channel. Important for reducing fluoride concentration in the cell, thus reducing its toxicity. The protein is Fluoride-specific ion channel FluC 2 of Leifsonia xyli subsp. xyli (strain CTCB07).